Consider the following 151-residue polypeptide: UPF0208 membrane protein KPN78578_26420 (151 aa).

2 consecutive transmembrane segments (helical) span residues 46–65 and 69–91; these read YAIR…QIAL and LGPA…WWLG.

The protein belongs to the UPF0208 family.

The protein localises to the cell inner membrane. The protein is UPF0208 membrane protein KPN78578_26420 of Klebsiella pneumoniae subsp. pneumoniae (strain ATCC 700721 / MGH 78578).